Here is a 205-residue protein sequence, read N- to C-terminus: Small ribosomal subunit protein uS4 (205 aa).

A disordered region spans residues 19–45; that stretch reads IWGRPKSPVNRREYGPGQHGQRRKGKL. The 64-residue stretch at 94-157 folds into the S4 RNA-binding domain; it reads RRLDAVVYRA…KQLAFVLEAS (64 aa).

As to quaternary structure, part of the 30S ribosomal subunit. Contacts protein S5. The interaction surface between S4 and S5 is involved in control of translational fidelity. May be methylated on an undetermined residue.

Functionally, one of the primary rRNA binding proteins, it binds directly to 16S rRNA where it nucleates assembly of the body of the 30S subunit. In terms of biological role, with S5 and S12 plays an important role in translational accuracy. This Rhodopseudomonas palustris (strain ATCC BAA-98 / CGA009) protein is Small ribosomal subunit protein uS4.